A 239-amino-acid polypeptide reads, in one-letter code: Pyridoxine 5'-phosphate synthase (239 aa).

Residue asparagine 7 participates in 3-amino-2-oxopropyl phosphate binding. Residue 9–10 (DH) participates in 1-deoxy-D-xylulose 5-phosphate binding. Arginine 18 is a 3-amino-2-oxopropyl phosphate binding site. The active-site Proton acceptor is the histidine 43. Residues arginine 45 and histidine 50 each contribute to the 1-deoxy-D-xylulose 5-phosphate site. Glutamate 70 serves as the catalytic Proton acceptor. 1-deoxy-D-xylulose 5-phosphate is bound at residue threonine 100. Histidine 191 functions as the Proton donor in the catalytic mechanism. Residues glycine 192 and 213 to 214 (GH) each bind 3-amino-2-oxopropyl phosphate.

The protein belongs to the PNP synthase family. In terms of assembly, homooctamer; tetramer of dimers.

It is found in the cytoplasm. It carries out the reaction 3-amino-2-oxopropyl phosphate + 1-deoxy-D-xylulose 5-phosphate = pyridoxine 5'-phosphate + phosphate + 2 H2O + H(+). The protein operates within cofactor biosynthesis; pyridoxine 5'-phosphate biosynthesis; pyridoxine 5'-phosphate from D-erythrose 4-phosphate: step 5/5. Catalyzes the complicated ring closure reaction between the two acyclic compounds 1-deoxy-D-xylulose-5-phosphate (DXP) and 3-amino-2-oxopropyl phosphate (1-amino-acetone-3-phosphate or AAP) to form pyridoxine 5'-phosphate (PNP) and inorganic phosphate. The polypeptide is Pyridoxine 5'-phosphate synthase (Geobacter metallireducens (strain ATCC 53774 / DSM 7210 / GS-15)).